The primary structure comprises 739 residues: Polyribonucleotide nucleotidyltransferase (739 aa).

Mg(2+) is bound by residues Asp487 and Asp493. Residues 554-613 enclose the KH domain; it reads PRIETMQIPTDKIRDVIGTGGKVIREIVEKTGAKINIEDTGVVKIASADGKAIKAAYNWI. Residues 623–691 enclose the S1 motif domain; that stretch reads GVIYDGTIVK…DRGKIRLSMK (69 aa). Residues 694-739 are disordered; it reads DQQTGEDITDKIKAQRDAERAERGDEPREPREGGRHRGERRREAGE. A compositionally biased stretch (basic and acidic residues) spans 701–739; it reads ITDKIKAQRDAERAERGDEPREPREGGRHRGERRREAGE.

Belongs to the polyribonucleotide nucleotidyltransferase family. Requires Mg(2+) as cofactor.

It localises to the cytoplasm. It carries out the reaction RNA(n+1) + phosphate = RNA(n) + a ribonucleoside 5'-diphosphate. In terms of biological role, involved in mRNA degradation. Catalyzes the phosphorolysis of single-stranded polyribonucleotides processively in the 3'- to 5'-direction. The protein is Polyribonucleotide nucleotidyltransferase of Methylobacterium radiotolerans (strain ATCC 27329 / DSM 1819 / JCM 2831 / NBRC 15690 / NCIMB 10815 / 0-1).